The primary structure comprises 299 residues: Ribonuclease 3-like protein 3 (299 aa).

The RNase III domain maps to 39–183 (VAAVESLLGY…LIGAIYCDSN (145 aa)). Positions 79, 169, and 172 each coordinate Mg(2+). The DRBM domain maps to 209–273 (HPVSELFEFC…AKAALDKLKE (65 aa)). The tract at residues 274 to 299 (TLGQSQTEPMSAEVSEQFNKIDLTGS) is disordered. Over residues 275-291 (LGQSQTEPMSAEVSEQF) the composition is skewed to polar residues.

Mg(2+) serves as cofactor. It depends on Mn(2+) as a cofactor.

In terms of biological role, cleaves double-stranded RNA (dsRNA). The chain is Ribonuclease 3-like protein 3 from Oryza sativa subsp. japonica (Rice).